A 463-amino-acid chain; its full sequence is NADH dehydrogenase [ubiquinone] iron-sulfur protein 2, mitochondrial (463 aa).

The transit peptide at 1 to 33 (MAALRVLCGLRGVAAQVLRPGAGVRLPIQPSRG) directs the protein to the mitochondrion. K62 bears the N6-acetyllysine mark. At R118 the chain carries Symmetric dimethylarginine. C326, C332, and C347 together coordinate [4Fe-4S] cluster.

This sequence belongs to the complex I 49 kDa subunit family. As to quaternary structure, core subunit of respiratory chain NADH dehydrogenase (Complex I) which is composed of 45 different subunits. Component of the iron-sulfur (IP) fragment of the enzyme. Interacts with NDUFAF3. Interacts with NDUFAF7. Interacts with CERS2. [4Fe-4S] cluster serves as cofactor. In terms of processing, dimethylation at Arg-118 by NDUFAF7 takes place after NDUFS2 assembles into the complex I, leading to stabilize the early intermediate complex.

The protein localises to the mitochondrion inner membrane. It catalyses the reaction a ubiquinone + NADH + 5 H(+)(in) = a ubiquinol + NAD(+) + 4 H(+)(out). Its function is as follows. Core subunit of the mitochondrial membrane respiratory chain NADH dehydrogenase (Complex I) which catalyzes electron transfer from NADH through the respiratory chain, using ubiquinone as an electron acceptor. Essential for the catalytic activity and assembly of complex I. Redox-sensitive, critical component of the oxygen-sensing pathway in the pulmonary vasculature which plays a key role in acute pulmonary oxygen-sensing and hypoxic pulmonary vasoconstriction. Plays an important role in carotid body sensing of hypoxia. Essential for glia-like neural stem and progenitor cell proliferation, differentiation and subsequent oligodendrocyte or neuronal maturation. This is NADH dehydrogenase [ubiquinone] iron-sulfur protein 2, mitochondrial (NDUFS2) from Gorilla gorilla gorilla (Western lowland gorilla).